The primary structure comprises 308 residues: GTPase Era (308 aa).

An Era-type G domain is found at 7-181; sequence RCGWVALIGP…LRLIVGYMPE (175 aa). The tract at residues 15-22 is G1; that stretch reads GPPNAGKS. 15–22 contributes to the GTP binding site; that stretch reads GPPNAGKS. The tract at residues 41–45 is G2; it reads QTTRN. The G3 stretch occupies residues 62 to 65; it reads DTPG. Residues 62–66 and 130–133 each bind GTP; these read DTPGI and NKID. Positions 130 to 133 are G4; sequence NKID. The G5 stretch occupies residues 160 to 162; that stretch reads ASA. In terms of domain architecture, KH type-2 spans 212-290; sequence LRQELPYSTA…HLELWVKVRE (79 aa).

It belongs to the TRAFAC class TrmE-Era-EngA-EngB-Septin-like GTPase superfamily. Era GTPase family. As to quaternary structure, monomer.

It localises to the cytoplasm. The protein localises to the cell inner membrane. Its function is as follows. An essential GTPase that binds both GDP and GTP, with rapid nucleotide exchange. Plays a role in 16S rRNA processing and 30S ribosomal subunit biogenesis and possibly also in cell cycle regulation and energy metabolism. This is GTPase Era from Nitratidesulfovibrio vulgaris (strain DP4) (Desulfovibrio vulgaris).